A 652-amino-acid polypeptide reads, in one-letter code: Probable endo-1,3(4)-beta-glucanase AFUB_029980 (652 aa).

Residues 1–21 form the signal peptide; the sequence is MAPSSLLLSVGSLITSSLVSA. The 254-residue stretch at 36–289 folds into the GH16 domain; it reads ESWQGESFIN…WAGNVFAEST (254 aa). The N-linked (GlcNAc...) asparagine glycan is linked to asparagine 64. Glutamate 145 acts as the Nucleophile in catalysis. Glutamate 150 acts as the Proton donor in catalysis. Asparagine 200 and asparagine 208 each carry an N-linked (GlcNAc...) asparagine glycan. The interval 379–423 is disordered; it reads NTVATSAADHATPSSAETTTVPAATGAPSVSATEGGDSELESTST. Residues 390-410 show a composition bias toward polar residues; it reads TPSSAETTTVPAATGAPSVSA. Residue asparagine 453 is glycosylated (N-linked (GlcNAc...) asparagine). The tract at residues 509 to 551 is disordered; it reads SEIPTAPPEPVSQAVSTGSFDDSDTAQGDSEEQGSIASASVAP. The segment covering 529–540 has biased composition (acidic residues); it reads DDSDTAQGDSEE. Asparagine 630 carries GPI-anchor amidated asparagine lipidation. The propeptide at 631–652 is removed in mature form; it reads GANRMSVGLSGLIGVMFIAALA.

It belongs to the glycosyl hydrolase 16 family.

The protein localises to the cell membrane. The catalysed reaction is Endohydrolysis of (1-&gt;3)- or (1-&gt;4)-linkages in beta-D-glucans when the glucose residue whose reducing group is involved in the linkage to be hydrolyzed is itself substituted at C-3.. Its function is as follows. Mixed-linked glucanase involved in the degradation of complex natural cellulosic substrates. This chain is Probable endo-1,3(4)-beta-glucanase AFUB_029980, found in Aspergillus fumigatus (strain CBS 144.89 / FGSC A1163 / CEA10) (Neosartorya fumigata).